The sequence spans 200 residues: Biogenesis of lysosome-related organelles complex 1 subunit 3 (200 aa).

The segment covering 1–11 (MESQSRRRRPL) has biased composition (basic residues). Positions 1 to 81 (MESQSRRRRP…KAAPRDLPPL (81 aa)) are disordered. The segment covering 41 to 55 (LGPSGPTRGRPTGLR) has biased composition (low complexity). Thr-63 is subject to Phosphothreonine. At Ser-65 the chain carries Phosphoserine.

This sequence belongs to the BLOC1S3 family. In terms of assembly, component of the biogenesis of lysosome-related organelles complex 1 (BLOC-1) composed of BLOC1S1, BLOC1S2, BLOC1S3, BLOC1S4, BLOC1S5, BLOC1S6, DTNBP1/BLOC1S7 and SNAPIN/BLOC1S8. Octamer composed of one copy each BLOC1S1, BLOC1S2, BLOC1S3, BLOC1S4, BLOC1S5, BLOC1S6, DTNBP1/BLOC1S7 and SNAPIN/BLOC1S8. The BLOC-1 complex associates with the AP-3 protein complex and membrane protein cargos. Interacts directly with BLOC1S2. Interacts with BLOC1S4, BLOC1S5 and BLOC1S6. Phosphorylated.

It localises to the cytoplasm. Its function is as follows. Component of the BLOC-1 complex, a complex that is required for normal biogenesis of lysosome-related organelles (LRO), such as platelet dense granules and melanosomes. In concert with the AP-3 complex, the BLOC-1 complex is required to target membrane protein cargos into vesicles assembled at cell bodies for delivery into neurites and nerve terminals. The BLOC-1 complex, in association with SNARE proteins, is also proposed to be involved in neurite extension. Plays a role in intracellular vesicle trafficking. The sequence is that of Biogenesis of lysosome-related organelles complex 1 subunit 3 (BLOC1S3) from Bos taurus (Bovine).